The following is a 159-amino-acid chain: Phosphoribosylaminoimidazole carboxylase (159 aa).

S11, D14, S38, K41, G67, and S69 together coordinate substrate.

It catalyses the reaction 5-amino-1-(5-phospho-D-ribosyl)imidazole-4-carboxylate + H(+) = 5-amino-1-(5-phospho-beta-D-ribosyl)imidazole + CO2. Its pathway is purine metabolism; IMP biosynthesis via de novo pathway; 5-amino-1-(5-phospho-D-ribosyl)imidazole-4-carboxylate from 5-amino-1-(5-phospho-D-ribosyl)imidazole (carboxylase route): step 1/1. Functionally, catalyzes the reversible conversion of 5-aminoimidazole ribonucleotide (AIR) and CO(2) to 4-carboxy-5-aminoimidazole ribonucleotide (CAIR). Does not accept N5-carboxyaminoimidazole ribonucleotide (N5-CAIR) as a substrate. This chain is Phosphoribosylaminoimidazole carboxylase, found in Treponema denticola (strain ATCC 35405 / DSM 14222 / CIP 103919 / JCM 8153 / KCTC 15104).